Reading from the N-terminus, the 368-residue chain is Proline-rich protein 5-like (368 aa).

S28 carries the phosphoserine modification. Residues 327–368 (PSFPPPHRQCSSEPNITDNPDGLEEGARGSQEGSELNCASLS) form a disordered region. Polar residues-rich tracts occupy residues 335–344 (QCSSEPNITD) and 357–368 (QEGSELNCASLS).

It belongs to the PROTOR family. In terms of assembly, interacts with the mammalian target of rapamycin complex 2 (mTORC2) which contains MTOR, MLST8, PRR5, RICTOR, MAPKAP1 and DEPTOR. Interacts with RFFL. Interacts (via C-terminus) with ZFP36 (via C-terminus); this interaction may accelerate ZFP36-mediated mRNA decay during stress. Interacts with RICTOR. Ubiquitinated. Ubiquitination by RFFL promotes proteasomal degradation of PRR5L thereby modifying the substrate-specific activity of the mTORC2 complex. Ubiquitination by RFFL is stimulated by LPA/lysophosphatidic acid.

Its function is as follows. Associates with the mTORC2 complex that regulates cellular processes including survival and organization of the cytoskeleton. Regulates the activity of the mTORC2 complex in a substrate-specific manner preventing for instance the specific phosphorylation of PKCs and thereby controlling cell migration. Plays a role in the stimulation of ZFP36-mediated mRNA decay of several ZFP36-associated mRNAs, such as TNF-alpha and GM-CSF, in response to stress. Required for ZFP36 localization to cytoplasmic stress granule (SG) and P-body (PB) in response to stress. This is Proline-rich protein 5-like (PRR5L) from Homo sapiens (Human).